We begin with the raw amino-acid sequence, 880 residues long: DNA-directed RNA polymerase subunit Rpo1N (880 aa).

Zn(2+) is bound by residues Cys58, Cys61, Cys68, and His71. DsDNA contacts are provided by residues Lys88 and 92-95; that span reads EFLK. Residues Cys98 and Cys101 each coordinate Zn(2+). Lys138 is a binding site for dsDNA. Cys146 and Cys149 together coordinate Zn(2+). DsDNA-binding positions include Lys303, 305–310, Arg323, and Gln422; that span reads KEGRFR. Mg(2+) is bound by residues Asp456, Asp458, and Asp460. Residues Arg573, Cys575, Cys580, and His582 each contribute to the Zn(2+) site. DsDNA contacts are provided by residues 812 to 822 and Gln815; that span reads RTSQSGYMQRR.

This sequence belongs to the RNA polymerase beta' chain family. In terms of assembly, part of the 13-subunit RNA polymerase complex. Rpo1N and Rpo5 form a cleft which docks Rpo13. Interacts with Rpo8 on the periphery of the clamp head. The cofactor is Mg(2+). Zn(2+) is required as a cofactor.

The protein localises to the cytoplasm. It carries out the reaction RNA(n) + a ribonucleoside 5'-triphosphate = RNA(n+1) + diphosphate. Functionally, DNA-dependent RNA polymerase (RNAP) catalyzes the transcription of DNA into RNA using the four ribonucleoside triphosphates as substrates. Forms the clamp head domain. This is DNA-directed RNA polymerase subunit Rpo1N from Saccharolobus shibatae (strain ATCC 51178 / DSM 5389 / JCM 8931 / NBRC 15437 / B12) (Sulfolobus shibatae).